We begin with the raw amino-acid sequence, 342 residues long: MSSIRLADLAQQLNAQLHGDGDIVITSIAPMHSANGEQITFLSDSRYRERLGECQAAAVVLQASDLPYCNIPALVVANPYLAYAYMAQIMDTTPIPAQDIHSSAVISPQATLGKNVAVGANAVIESGVVLGDNVVIGAGCFIGKNTRIGAGSRLWANVSVYHNVEMGEQCLIQSGAVIGSDGFGYANDRGKWVKIPQLGSVIIGDRVEIGACTTIDRGALDNTIIGNGVIIDNQCQIAHNVIIGDNTAVAGGVIMAGSLKIGCYCMIGGASVINGHMEICDKVTVTGMSMVMRPITEPGVYSSGIPAQPNKVWRKTAALVMNINEMNKRLKSMESKLEDENE.

Catalysis depends on His239, which acts as the Proton acceptor.

It belongs to the transferase hexapeptide repeat family. LpxD subfamily. As to quaternary structure, homotrimer.

It catalyses the reaction a UDP-3-O-[(3R)-3-hydroxyacyl]-alpha-D-glucosamine + a (3R)-hydroxyacyl-[ACP] = a UDP-2-N,3-O-bis[(3R)-3-hydroxyacyl]-alpha-D-glucosamine + holo-[ACP] + H(+). The enzyme catalyses UDP-3-O-[(3R)-3-hydroxytetradecanoyl]-alpha-D-glucosamine + (3R)-hydroxytetradecanoyl-[ACP] = UDP-2-N,3-O-bis[(3R)-3-hydroxytetradecanoyl]-alpha-D-glucosamine + holo-[ACP] + H(+). It functions in the pathway glycolipid biosynthesis; lipid IV(A) biosynthesis; lipid IV(A) from (3R)-3-hydroxytetradecanoyl-[acyl-carrier-protein] and UDP-N-acetyl-alpha-D-glucosamine: step 3/6. Its function is as follows. Catalyzes the N-acylation of UDP-3-O-(hydroxytetradecanoyl)glucosamine using 3-hydroxytetradecanoyl-ACP as the acyl donor. Is involved in the biosynthesis of lipid A, a phosphorylated glycolipid that anchors the lipopolysaccharide to the outer membrane of the cell. The chain is UDP-3-O-(3-hydroxymyristoyl)glucosamine N-acyltransferase from Photorhabdus laumondii subsp. laumondii (strain DSM 15139 / CIP 105565 / TT01) (Photorhabdus luminescens subsp. laumondii).